Consider the following 123-residue polypeptide: MPTVNQLIRKPRQANVKRNKVPALQENPQKRGVCTRVYTTTPRKPNSALRKVAKIRLTNGFEVIGYIPGEGHNLQEHSVVMIRGGRVKDLPGVRYHIIRGVLDTQGVKNRKQRRSKYGAKRPK.

3-methylthioaspartic acid is present on aspartate 89.

This sequence belongs to the universal ribosomal protein uS12 family. Part of the 30S ribosomal subunit. Contacts proteins S8 and S17. May interact with IF1 in the 30S initiation complex.

In terms of biological role, with S4 and S5 plays an important role in translational accuracy. Interacts with and stabilizes bases of the 16S rRNA that are involved in tRNA selection in the A site and with the mRNA backbone. Located at the interface of the 30S and 50S subunits, it traverses the body of the 30S subunit contacting proteins on the other side and probably holding the rRNA structure together. The combined cluster of proteins S8, S12 and S17 appears to hold together the shoulder and platform of the 30S subunit. This is Small ribosomal subunit protein uS12 from Rhizobium etli (strain ATCC 51251 / DSM 11541 / JCM 21823 / NBRC 15573 / CFN 42).